A 231-amino-acid chain; its full sequence is MALRTLASRKTLAAAALPLAAAAAARGVTTVALPDLPYDYGALEPAISGEIMRLHHQKHHATYVANYNKALEQLDAAVAKGDAPAIVHLQSAIKFNGGGHVNHSIFWNNLKPISEGGGDPPHAKLGWAIDEDFGSFEALVKKMSAEGAALQGSGWVWLALDKEAKKLSVETTANQDPLVTKGANLVPLLGIDVWEHAYYLQYKNVRPDYLSNIWKVMNWKYAGEVYENATA.

Residues 1-27 (MALRTLASRKTLAAAALPLAAAAAARG) constitute a mitochondrion transit peptide. 4 residues coordinate Mn(2+): His55, His103, Asp192, and His196.

The protein belongs to the iron/manganese superoxide dismutase family. As to quaternary structure, homotetramer. It depends on Mn(2+) as a cofactor.

It is found in the mitochondrion matrix. The catalysed reaction is 2 superoxide + 2 H(+) = H2O2 + O2. In terms of biological role, destroys superoxide anion radicals which are normally produced within the cells and which are toxic to biological systems. This is Superoxide dismutase [Mn], mitochondrial (SODA) from Oryza sativa subsp. japonica (Rice).